We begin with the raw amino-acid sequence, 63 residues long: Large ribosomal subunit protein bL28c (63 aa).

It belongs to the bacterial ribosomal protein bL28 family.

Its subcellular location is the plastid. It localises to the chloroplast. This chain is Large ribosomal subunit protein bL28c (rpl28), found in Porphyra purpurea (Red seaweed).